A 1146-amino-acid polypeptide reads, in one-letter code: Inositol hexakisphosphate and diphosphoinositol-pentakisphosphate kinase (1146 aa).

A disordered region spans residues 1–33; it reads MSGIKKEPIESDEVPQQETKNNLPSAPSEMSPL. Positions 16–25 are enriched in polar residues; it reads QQETKNNLPS. Phosphoserine is present on residues S31, S54, and S77. Residues 93-185 form a disordered region; that stretch reads TALGNGNNTN…STSHPKPRLP (93 aa). Positions 96 to 106 are enriched in low complexity; it reads GNGNNTNTVTT. A compositionally biased stretch (basic and acidic residues) spans 110–120; it reads KKADSESKSEA. Residues 125–144 show a composition bias toward polar residues; it reads LSNSNIVNDADNINSISKTG. The span at 164–178 shows a compositional bias: low complexity; sequence SVPTSSASSRKSSTS. 197–198 is a binding site for substrate; the sequence is AK. Residues R278, K351, H358, R377, 402-405, and 412-414 contribute to the ATP site; these read EQFM and DVK. 377-378 is a substrate binding site; it reads RK. Residues K414 and R428 each contribute to the substrate site. ATP contacts are provided by residues S430, D475, and 487-489; that span reads DVN. 492 to 495 contacts substrate; the sequence is SFVK. A polyphosphoinositide-binding domain region spans residues 530 to 597; that stretch reads REEKEQKWVF…VLQALRIALD (68 aa). S895 and S1107 each carry phosphoserine. The disordered stretch occupies residues 1106–1146; it reads TSPNLSFQKRKTRRKSVSVEKLKRPASSGSSSSTSVNKTLD.

Belongs to the histidine acid phosphatase family. VIP1 subfamily.

It localises to the cytoplasm. The protein localises to the cytoskeleton. It catalyses the reaction 1D-myo-inositol hexakisphosphate + ATP = 1-diphospho-1D-myo-inositol 2,3,4,5,6-pentakisphosphate + ADP. The catalysed reaction is 5-diphospho-1D-myo-inositol 1,2,3,4,6-pentakisphosphate + ATP + H(+) = 1,5-bis(diphospho)-1D-myo-inositol 2,3,4,6-tetrakisphosphate + ADP. In terms of biological role, bifunctional inositol kinase that acts in concert with the IP6K kinases to synthesize the diphosphate group-containing inositol pyrophosphates diphosphoinositol pentakisphosphate, PP-InsP5, and bis-diphosphoinositol tetrakisphosphate, (PP)2-InsP4. Phosphorylates inositol hexakisphosphate (InsP6) at position 1 to produce PP-InsP5 which is in turn phosphorylated by IP6Ks to produce (PP)2-InsP4. Alternatively, phosphorylates PP-InsP5 at position 1, produced by IP6Ks from InsP6, to produce (PP)2-InsP4. Required for maintaining cellular integrity, normal growth and interactions with the ARP complex. Acts as a regulator of the PHO80-PHO85 cyclin/cyclin-dependent kinase (CDK) complex, thereby regulating signaling of phosphate availability. Required for the function of the cortical actin cytoskeleton, possibly by participating in correct F-actin localization and ensuring polarized growth. Regulates polarized growth and modulates interphase microtubule cytoskeleton. Regulates microtubule dynamics without the requirement of microtubule plus-end tracking protein Mal3. Required for growth zone selection. The protein is Inositol hexakisphosphate and diphosphoinositol-pentakisphosphate kinase of Saccharomyces cerevisiae (strain ATCC 204508 / S288c) (Baker's yeast).